We begin with the raw amino-acid sequence, 127 residues long: Cliotide T3 (127 aa).

Residues 1–24 form the signal peptide; it reads MAYVRLTSLAVLFFLAASVMKTEG. The cyclopeptide (Gly-Asn) cross-link spans 25-53; the sequence is GLPTCGETCTLGTCYVPDCSCSWPICMKN. Intrachain disulfides connect C29/C43, C33/C45, and C38/C50. Residues 54–127 constitute a propeptide, removed in mature form; the sequence is HIIAANAKTV…DLKMPLESTN (74 aa).

Post-translationally, contains 3 disulfide bonds. In terms of processing, this is a cyclic peptide. Expressed in flower, stem, shoot, leaf and seed but not in root, pod and nodule (at protein level).

In terms of biological role, probably participates in a plant defense mechanism. Not active against Gram-negative bacteria E.coli ATCC 700926, K.pneumoniae ATTC 13883 and P.aeruginosa ATCC 39018 at concentration up to 100 uM. Has cytotoxic and hemolytic activity. The polypeptide is Cliotide T3 (Clitoria ternatea (Butterfly pea)).